The following is a 272-amino-acid chain: Ribonuclease HII (272 aa).

The region spanning 87–272 is the RNase H type-2 domain; that stretch reads KYVAGVDEVG…HRMSFLKNIL (186 aa). Residues D93, E94, and D188 each coordinate a divalent metal cation.

Belongs to the RNase HII family. Mn(2+) serves as cofactor. Mg(2+) is required as a cofactor.

The protein localises to the cytoplasm. It carries out the reaction Endonucleolytic cleavage to 5'-phosphomonoester.. Functionally, endonuclease that specifically degrades the RNA of RNA-DNA hybrids. In Clostridium perfringens (strain SM101 / Type A), this protein is Ribonuclease HII.